Here is a 163-residue protein sequence, read N- to C-terminus: IQ domain-containing protein F2 (163 aa).

IQ domains lie at 42–71 (RVIA…STWI) and 98–127 (RERA…AIYV).

This Bos taurus (Bovine) protein is IQ domain-containing protein F2 (IQCF2).